The chain runs to 64 residues: Conotoxin mr5.3 (64 aa).

Residues 1–19 (MRCVPVFVILLLLIASVPS) form the signal peptide. The propeptide occupies 20–48 (VDAQLKTKDDMPLASSHANVKRTLQILRN). A 4-carboxyglutamate mark is found at Glu56 and Glu60.

In terms of processing, contains 2 disulfide bonds that can be either 'C1-C3, C2-C4' or 'C1-C4, C2-C3', since these disulfide connectivities have been observed for conotoxins with cysteine framework V (for examples, see AC P0DQQ7 and AC P81755). As to expression, expressed by the venom duct.

It is found in the secreted. This chain is Conotoxin mr5.3, found in Conus marmoreus (Marble cone).